Here is a 783-residue protein sequence, read N- to C-terminus: LPS-assembly protein LptD (783 aa).

The signal sequence occupies residues methionine 1 to alanine 24.

Belongs to the LptD family. Component of the lipopolysaccharide transport and assembly complex. Interacts with LptE and LptA.

The protein localises to the cell outer membrane. Functionally, together with LptE, is involved in the assembly of lipopolysaccharide (LPS) at the surface of the outer membrane. The sequence is that of LPS-assembly protein LptD from Mannheimia succiniciproducens (strain KCTC 0769BP / MBEL55E).